A 310-amino-acid chain; its full sequence is Methionyl-tRNA formyltransferase (310 aa).

Residue 109 to 112 participates in (6S)-5,6,7,8-tetrahydrofolate binding; it reads SLLP.

Belongs to the Fmt family.

The enzyme catalyses L-methionyl-tRNA(fMet) + (6R)-10-formyltetrahydrofolate = N-formyl-L-methionyl-tRNA(fMet) + (6S)-5,6,7,8-tetrahydrofolate + H(+). Functionally, attaches a formyl group to the free amino group of methionyl-tRNA(fMet). The formyl group appears to play a dual role in the initiator identity of N-formylmethionyl-tRNA by promoting its recognition by IF2 and preventing the misappropriation of this tRNA by the elongation apparatus. The polypeptide is Methionyl-tRNA formyltransferase (Macrococcus caseolyticus (strain JCSC5402) (Macrococcoides caseolyticum)).